Reading from the N-terminus, the 1334-residue chain is Nck-associated protein 5-like (1334 aa).

5 disordered regions span residues methionine 1–glycine 28, leucine 115–proline 146, threonine 210–glutamine 234, glycine 266–threonine 316, and proline 349–serine 711. The segment at methionine 1–glutamate 139 is mediates interaction with CDK5RAP2 and is required for homodimerization and microtubule bundle formation. Residues glycine 28–glutamine 106 are a coiled coil. A compositionally biased stretch (pro residues) spans proline 122–serine 132. A compositionally biased stretch (polar residues) spans glycine 358–lysine 372. 4 positions are modified to phosphoserine; by CDK1: serine 440, serine 451, serine 470, and serine 477. Over residues serine 468 to proline 481 the composition is skewed to low complexity. Residues serine 484–proline 487 carry the (S/T)X(I/L)P motif 1 motif. Residues serine 493, serine 496, and serine 498 each carry the phosphoserine modification. The span at leucine 519 to serine 547 shows a compositional bias: polar residues. 2 positions are modified to phosphoserine; by CDK1: serine 571 and serine 577. Over residues proline 638–serine 649 the composition is skewed to polar residues. Threonine 659 is modified (phosphothreonine). Positions arginine 750–lysine 1146 are mediates interaction with beta-tubulin and is required for microtubule bundle formation. Phosphoserine; by CDK1 is present on serine 767. The segment at leucine 782–glutamate 884 is disordered. A compositionally biased stretch (low complexity) spans serine 810–lysine 825. A (S/T)X(I/L)P motif 2 motif is present at residues threonine 816–proline 819. The (S/T)X(I/L)P motif 3; required for interaction with MAPRE1 signature appears at serine 926–proline 929. Disordered stretches follow at residues leucine 931–glutamate 953, lysine 986–leucine 1015, and leucine 1030–isoleucine 1183. Over residues arginine 933–glutamate 942 the composition is skewed to basic and acidic residues. A coiled-coil region spans residues methionine 956 to arginine 994. Residues valine 1033–tyrosine 1050 show a composition bias toward basic and acidic residues. Residues glycine 1079–glutamate 1090 are compositionally biased toward low complexity. Residues serine 1110–leucine 1122 show a composition bias toward polar residues. The span at leucine 1152–threonine 1167 shows a compositional bias: pro residues. Serine 1194 is subject to Phosphoserine. Residues alanine 1197–proline 1206 are compositionally biased toward low complexity. The disordered stretch occupies residues alanine 1197 to glycine 1334. Polar residues predominate over residues threonine 1235–aspartate 1247. Residues leucine 1313–glycine 1334 show a composition bias toward low complexity.

As to quaternary structure, homodimer. Interacts with CDK5RAP2. Interacts with MAPRE1. Interacts with beta-tubulin. CDK1/Cyclin B-dependent phosphorylation mediates its dissociation from centrosomes during mitosis.

The protein localises to the cytoplasm. The protein resides in the cytoskeleton. It localises to the microtubule organizing center. It is found in the centrosome. In terms of biological role, regulates microtubule organization and stabilization. Promotes microtubule growth and bundling formation and stabilizes microtubules by increasing intense acetylation of microtubules. Both tubulin-binding and homodimer formation are required for NCKAP5L-mediated microtubule bundle formation. The protein is Nck-associated protein 5-like of Homo sapiens (Human).